The sequence spans 78 residues: Conotoxin TsMSGL-11 (78 aa).

The first 24 residues, 1–24 (MSGLGIMVLTLLLLVFMATSHQDA), serve as a signal peptide directing secretion. Positions 25–44 (GEKQATQRDAINVRRRRSIT) are excised as a propeptide. Intrachain disulfides connect Cys-51/Cys-63, Cys-55/Cys-72, and Cys-62/Cys-76. At Phe-77 the chain carries Phenylalanine amide.

The protein belongs to the conotoxin O3 superfamily. Expressed by the venom duct.

The protein resides in the secreted. This chain is Conotoxin TsMSGL-11, found in Conus tessulatus (Tessellate cone).